A 575-amino-acid polypeptide reads, in one-letter code: RecBCD enzyme subunit RecD (575 aa).

170–177 (GGPGTGKT) serves as a coordination point for ATP.

The protein belongs to the RecD family. In terms of assembly, heterotrimer of RecB, RecC and RecD. All subunits contribute to DNA-binding.

The enzyme catalyses Couples ATP hydrolysis with the unwinding of duplex DNA at the replication fork by translocating in the 5'-3' direction. This creates two antiparallel DNA single strands (ssDNA). The leading ssDNA polymer is the template for DNA polymerase III holoenzyme which synthesizes a continuous strand.. The catalysed reaction is ATP + H2O = ADP + phosphate + H(+). Its function is as follows. A helicase/nuclease that prepares dsDNA breaks (DSB) for recombinational DNA repair. Binds to DSBs and unwinds DNA via a highly rapid and processive ATP-dependent bidirectional helicase activity. Holoenzyme degrades any linearized DNA that is unable to undergo homologous recombination. In the holoenzyme this subunit has ssDNA-dependent ATPase and 5'-3' helicase activity. When added to pre-assembled RecBC greatly stimulates nuclease activity and augments holoenzyme processivity. Unlike the case in E.coli, suppresses RecA-dependent homologous recombination, is instead required for single-strand annealing pathway repair of DSB. A helicase/nuclease that prepares dsDNA breaks (DSB) for recombinational DNA repair. Binds to DSBs and unwinds DNA via a highly rapid and processive ATP-dependent bidirectional helicase activity. Unwinds dsDNA until it encounters a Chi (crossover hotspot instigator) sequence from the 3' direction. Cuts ssDNA a few nucleotides 3' to the Chi site. The properties and activities of the enzyme are changed at Chi. The Chi-altered holoenzyme produces a long 3'-ssDNA overhang and facilitates RecA-binding to the ssDNA for homologous DNA recombination and repair. Holoenzyme degrades any linearized DNA that is unable to undergo homologous recombination. In the holoenzyme this subunit has ssDNA-dependent ATPase and 5'-3' helicase activity. When added to pre-assembled RecBC greatly stimulates nuclease activity and augments holoenzyme processivity. Negatively regulates the RecA-loading ability of RecBCD. The polypeptide is RecBCD enzyme subunit RecD (Mycobacterium tuberculosis (strain CDC 1551 / Oshkosh)).